A 285-amino-acid chain; its full sequence is Acetyl-coenzyme A carboxylase carboxyl transferase subunit beta (285 aa).

Residues 33-285 (MWIKCSKCGK…TLGNILRMHS (253 aa)) form the CoA carboxyltransferase N-terminal domain. Zn(2+) is bound by residues C37, C40, C56, and C59. A C4-type zinc finger spans residues 37-59 (CSKCGKILYKSDVDDNFKVCPKC).

Belongs to the AccD/PCCB family. In terms of assembly, acetyl-CoA carboxylase is a heterohexamer composed of biotin carboxyl carrier protein (AccB), biotin carboxylase (AccC) and two subunits each of ACCase subunit alpha (AccA) and ACCase subunit beta (AccD). The cofactor is Zn(2+).

It localises to the cytoplasm. The catalysed reaction is N(6)-carboxybiotinyl-L-lysyl-[protein] + acetyl-CoA = N(6)-biotinyl-L-lysyl-[protein] + malonyl-CoA. It participates in lipid metabolism; malonyl-CoA biosynthesis; malonyl-CoA from acetyl-CoA: step 1/1. Its function is as follows. Component of the acetyl coenzyme A carboxylase (ACC) complex. Biotin carboxylase (BC) catalyzes the carboxylation of biotin on its carrier protein (BCCP) and then the CO(2) group is transferred by the transcarboxylase to acetyl-CoA to form malonyl-CoA. In Clostridium acetobutylicum (strain ATCC 824 / DSM 792 / JCM 1419 / IAM 19013 / LMG 5710 / NBRC 13948 / NRRL B-527 / VKM B-1787 / 2291 / W), this protein is Acetyl-coenzyme A carboxylase carboxyl transferase subunit beta.